The primary structure comprises 238 residues: ATP-dependent dethiobiotin synthetase BioD (238 aa).

12–17 (EVGKTV) is a binding site for ATP. T16 contacts Mg(2+). K37 is an active-site residue. Residue T41 participates in substrate binding. ATP-binding positions include D50, 109–112 (EGAG), 170–171 (GS), and 200–202 (PAG). Mg(2+) contacts are provided by D50 and E109.

The protein belongs to the dethiobiotin synthetase family. Homodimer. It depends on Mg(2+) as a cofactor.

The protein localises to the cytoplasm. It catalyses the reaction (7R,8S)-7,8-diammoniononanoate + CO2 + ATP = (4R,5S)-dethiobiotin + ADP + phosphate + 3 H(+). Its pathway is cofactor biosynthesis; biotin biosynthesis; biotin from 7,8-diaminononanoate: step 1/2. In terms of biological role, catalyzes a mechanistically unusual reaction, the ATP-dependent insertion of CO2 between the N7 and N8 nitrogen atoms of 7,8-diaminopelargonic acid (DAPA, also called 7,8-diammoniononanoate) to form a ureido ring. The protein is ATP-dependent dethiobiotin synthetase BioD of Streptomyces avermitilis (strain ATCC 31267 / DSM 46492 / JCM 5070 / NBRC 14893 / NCIMB 12804 / NRRL 8165 / MA-4680).